The chain runs to 1001 residues: Serine/threonine-protein kinase TAO1 (1001 aa).

Ser9 is subject to Phosphoserine. The Protein kinase domain occupies 28–281 (FTDLREIGHG…SEELLKHMFV (254 aa)). ATP is bound by residues 34-42 (IGHGSFGAV) and Lys57. Catalysis depends on Asp151, which acts as the Proton acceptor. 2 disordered regions span residues 324–380 (PAVE…DKSE) and 404–431 (ENYQ…HKSH). A compositionally biased stretch (low complexity) spans 350–370 (SNQSIPSMSISASSQSSSVNS). Phosphoserine occurs at positions 421 and 445. Residues 458-651 (SELREQMSGY…QTQKDLEHAM (194 aa)) adopt a coiled-coil conformation. Residues 567–587 (KEELNENQSTPKKEKQEWLSK) form a disordered region. Positions 577-587 (PKKEKQEWLSK) are enriched in basic and acidic residues. Thr669 carries the post-translational modification Phosphothreonine. Positions 754–877 (KAVLKRLKEE…LERQAREIEA (124 aa)) form a coiled coil. The disordered stretch occupies residues 905 to 1001 (PGASSWSHNP…ISNGSHMSYT (97 aa)). Residues 906-915 (GASSWSHNPT) show a composition bias toward polar residues. Ser965 is modified (phosphoserine). Residues 975–1001 (GGRTEQGMSRSTSVTSQISNGSHMSYT) are compositionally biased toward polar residues.

It belongs to the protein kinase superfamily. STE Ser/Thr protein kinase family. STE20 subfamily. In terms of assembly, self-associates. Interacts with MAP2K3. Interacts with SPRED1. Interacts with TESK1; the interaction inhibits TAOK1 kinase activity. Interacts with MAP3K7. Proteolytically processed by caspase-3 (CASP3). Post-translationally, autophosphorylated. Phosphorylated by ATM in response to DNA damage. Phosphorylated by LRRK2.

It is found in the cytoplasm. The catalysed reaction is L-seryl-[protein] + ATP = O-phospho-L-seryl-[protein] + ADP + H(+). It catalyses the reaction L-threonyl-[protein] + ATP = O-phospho-L-threonyl-[protein] + ADP + H(+). Its activity is regulated as follows. Serine/threonine-protein kinase activity is inhibited by SPRED1. Functionally, serine/threonine-protein kinase involved in various processes such as p38/MAPK14 stress-activated MAPK cascade, DNA damage response and regulation of cytoskeleton stability. Phosphorylates MAP2K3, MAP2K6 and MARK2. Acts as an activator of the p38/MAPK14 stress-activated MAPK cascade by mediating phosphorylation and subsequent activation of the upstream MAP2K3 and MAP2K6 kinases. Involved in G-protein coupled receptor signaling to p38/MAPK14. In response to DNA damage, involved in the G2/M transition DNA damage checkpoint by activating the p38/MAPK14 stress-activated MAPK cascade, probably by mediating phosphorylation of MAP2K3 and MAP2K6. Acts as a regulator of cytoskeleton stability by phosphorylating 'Thr-208' of MARK2, leading to activate MARK2 kinase activity and subsequent phosphorylation and detachment of MAPT/TAU from microtubules. Also acts as a regulator of apoptosis: regulates apoptotic morphological changes, including cell contraction, membrane blebbing and apoptotic bodies formation via activation of the MAPK8/JNK cascade. During fetal development, it plays an essential role in the regulation of neuronal differentiation and migration to the cortical plate. The protein is Serine/threonine-protein kinase TAO1 (Taok1) of Rattus norvegicus (Rat).